The sequence spans 146 residues: Large ribosomal subunit protein uL15 (146 aa).

Residues 1–54 are disordered; that stretch reads MKLHELQPAAGSRKAPKRVGRGTGSGLGRNAGKGEKGQNARSGGGVRPGFEGGQ. Composition is skewed to gly residues over residues 21-31 and 42-52; these read RGTGSGLGRNA and SGGGVRPGFEG.

It belongs to the universal ribosomal protein uL15 family. In terms of assembly, part of the 50S ribosomal subunit.

Functionally, binds to the 23S rRNA. This Clostridium botulinum (strain Eklund 17B / Type B) protein is Large ribosomal subunit protein uL15.